The following is a 265-amino-acid chain: Keratinocyte-associated transmembrane protein 2 (265 aa).

The signal sequence occupies residues Met-1–Ser-49. Over Arg-50–Asp-196 the chain is Extracellular. Polar residues predominate over residues Thr-72–Lys-96. Disordered stretches follow at residues Thr-72 to Ser-123 and Ser-135 to Thr-168. Asn-75 is a glycosylation site (N-linked (GlcNAc...) asparagine). Positions Glu-114–Ser-123 are enriched in acidic residues. A helical transmembrane segment spans residues Ser-197–Tyr-217. Topologically, residues His-218–Phe-265 are cytoplasmic. 2 positions are modified to phosphoserine: Ser-229 and Ser-256.

It is found in the membrane. This is Keratinocyte-associated transmembrane protein 2 (KCT2) from Pongo abelii (Sumatran orangutan).